Consider the following 563-residue polypeptide: PHD finger protein EHD3 (563 aa).

The tract at residues 1–46 is disordered; that stretch reads MGSQNRPPPPRKRQPPPPEDHLVTYKRRRSKETQPLPLMANGANSK. 3 PHD-type zinc fingers span residues 296 to 348, 420 to 472, and 474 to 524; these read LCPC…CSFK, SNLC…CWYC, and SCLC…CKIR.

In terms of assembly, interacts with TRX1. Expressed in shoot apical meristem and leaves.

It is found in the nucleus. Its function is as follows. Probable transcription factor involved in the regulation of floral induction under long day (LD) conditions. Promotes photoperiodic flowering by repressing GHD7, a major floral repressor. Seems to function independently of HD1. This chain is PHD finger protein EHD3, found in Oryza sativa subsp. japonica (Rice).